We begin with the raw amino-acid sequence, 285 residues long: Protein phosphatase 1 regulatory subunit 3B (285 aa).

The PP1-binding motif motif lies at 62–65 (RVSF). The region spanning 125 to 233 (RNRLQADHVC…SNRGKNYRII (109 aa)) is the CBM21 domain. Residue S261 is modified to Phosphoserine.

As to quaternary structure, interacts with glycogen, PPP1CC catalytic subunit of PP1 and PYGL. Associates with glycogen particles. Forms complexes with debranching enzyme, glycogen phosphorylase, glycogen synthase and phosphorylase kinase which is necessary for its regulation of PP1 activity. In terms of tissue distribution, highly expressed in the liver and, at lower levels, in skeletal muscle, including in vastus lateralis, gastrocnemius and soleus (at protein level). Highest mRNA levels are observed in skeletal muscle, and only moderate levels in liver and heart. Weak expression in placenta and lung.

Functionally, acts as a glycogen-targeting subunit for phosphatase PP1. Facilitates interaction of the PP1 with enzymes of the glycogen metabolism and regulates its activity. Suppresses the rate at which PP1 dephosphorylates (inactivates) glycogen phosphorylase and enhances the rate at which it activates glycogen synthase and therefore limits glycogen breakdown. Its activity is inhibited by PYGL, resulting in inhibition of the glycogen synthase and glycogen phosphorylase phosphatase activities of PP1. Dramatically increases basal and insulin-stimulated glycogen synthesis upon overexpression in hepatocytes. This is Protein phosphatase 1 regulatory subunit 3B (PPP1R3B) from Homo sapiens (Human).